The sequence spans 295 residues: Light-independent protochlorophyllide reductase iron-sulfur ATP-binding protein (295 aa).

ATP-binding positions include 39-44 (GIGKST) and Lys68. Position 43 (Ser43) interacts with Mg(2+). 2 residues coordinate [4Fe-4S] cluster: Cys124 and Cys158. 209 to 210 (NR) lines the ATP pocket.

The protein belongs to the NifH/BchL/ChlL family. As to quaternary structure, homodimer. Protochlorophyllide reductase is composed of three subunits; ChlL, ChlN and ChlB. Requires [4Fe-4S] cluster as cofactor.

The enzyme catalyses chlorophyllide a + oxidized 2[4Fe-4S]-[ferredoxin] + 2 ADP + 2 phosphate = protochlorophyllide a + reduced 2[4Fe-4S]-[ferredoxin] + 2 ATP + 2 H2O. It participates in porphyrin-containing compound metabolism; chlorophyll biosynthesis (light-independent). Its function is as follows. Component of the dark-operative protochlorophyllide reductase (DPOR) that uses Mg-ATP and reduced ferredoxin to reduce ring D of protochlorophyllide (Pchlide) to form chlorophyllide a (Chlide). This reaction is light-independent. The L component serves as a unique electron donor to the NB-component of the complex, and binds Mg-ATP. In Prochlorococcus marinus (strain MIT 9312), this protein is Light-independent protochlorophyllide reductase iron-sulfur ATP-binding protein.